The chain runs to 294 residues: Tyrosine-protein phosphatase (294 aa).

An N-terminal signal peptide occupies residues 1–24 (MKTHHANLALALMLGLSSSATAVA). Cys-182 acts as the Phosphocysteine intermediate in catalysis. 2 stretches are compositionally biased toward basic and acidic residues: residues 221-231 (QPKDSDERADH) and 238-247 (PGDRPQDGGH). The disordered stretch occupies residues 221 to 252 (QPKDSDERADHGAGQAEPGDRPQDGGHGRYRA).

It belongs to the protein-tyrosine phosphatase family. In terms of assembly, monomer.

It carries out the reaction O-phospho-L-tyrosyl-[protein] + H2O = L-tyrosyl-[protein] + phosphate. The sequence is that of Tyrosine-protein phosphatase (iphP) from Nostoc commune.